Here is a 188-residue protein sequence, read N- to C-terminus: Elongation factor P (188 aa).

The protein belongs to the elongation factor P family.

It localises to the cytoplasm. It functions in the pathway protein biosynthesis; polypeptide chain elongation. Involved in peptide bond synthesis. Stimulates efficient translation and peptide-bond synthesis on native or reconstituted 70S ribosomes in vitro. Probably functions indirectly by altering the affinity of the ribosome for aminoacyl-tRNA, thus increasing their reactivity as acceptors for peptidyl transferase. This chain is Elongation factor P, found in Sulfurimonas denitrificans (strain ATCC 33889 / DSM 1251) (Thiomicrospira denitrificans (strain ATCC 33889 / DSM 1251)).